The sequence spans 965 residues: Chondroitin synthase (965 aa).

Positions 132–418 are galactosaminyltransferase; A1 domain; that stretch reads FTWYKNRKKS…IVKEKVPYIY (287 aa). UDP-N-acetyl-alpha-D-galactosamine is bound by residues P158, R162, D189, Y218, R224, and 240–241; that span reads DC. Mn(2+) is bound at residue D242. 362-363 is a binding site for UDP-N-acetyl-alpha-D-galactosamine; the sequence is ED. Residue H387 coordinates Mn(2+). The segment at 419-683 is glucuronosyltransferase; A2 domain; the sequence is RKLLPIEDSH…ESRKYIFNKT (265 aa). Residues Y442, D470, and 518-521 each bind UDP-alpha-D-glucuronate; that span reads QLDS. D522 contributes to the Mn(2+) binding site. UDP-alpha-D-glucuronate is bound by residues H582 and 604–605; that span reads AV. A Mn(2+)-binding site is contributed by H632.

The protein belongs to the glycosyltransferase 2 family. CS/HAS subfamily. The cofactor is Mn(2+).

The protein resides in the cell membrane. It catalyses the reaction 3-O-(beta-D-GlcA-(1-&gt;3)-beta-D-GalNAc-(1-&gt;4)-beta-D-GlcA-(1-&gt;3)-beta-D-Gal-(1-&gt;3)-beta-D-Gal-(1-&gt;4)-beta-D-Xyl)-L-seryl-[protein] + UDP-N-acetyl-alpha-D-galactosamine = 3-O-(beta-D-GalNAc-(1-&gt;4)-beta-D-GlcA-(1-&gt;3)-beta-D-GalNAc-(1-&gt;4)-beta-D-GlcA-(1-&gt;3)-beta-D-Gal-(1-&gt;3)-beta-D-Gal-(1-&gt;4)-beta-D-Xyl)-L-seryl-[protein] + UDP + H(+). It carries out the reaction 3-O-{beta-D-GlcA-(1-&gt;3)-[beta-D-GalNAc-(1-&gt;4)-beta-D-GlcA-(1-&gt;3)](n)-beta-D-GalNAc-(1-&gt;4)-beta-D-GlcA-(1-&gt;3)-beta-D-Gal-(1-&gt;3)-beta-D-Gal-(1-&gt;4)-beta-D-Xyl}-L-seryl-[protein] + UDP-N-acetyl-alpha-D-galactosamine = 3-O-{[beta-D-GalNAc-(1-&gt;4)-beta-D-GlcA-(1-&gt;3)](n+1)-beta-D-GalNAc-(1-&gt;4)-beta-D-GlcA-(1-&gt;3)-beta-D-Gal-(1-&gt;3)-beta-D-Gal-(1-&gt;4)-beta-D-Xyl}-L-seryl-[protein] + UDP + H(+). The enzyme catalyses 3-O-(beta-D-GalNAc-(1-&gt;4)-beta-D-GlcA-(1-&gt;3)-beta-D-Gal-(1-&gt;3)-beta-D-Gal-(1-&gt;4)-beta-D-Xyl)-L-seryl-[protein] + UDP-alpha-D-glucuronate = 3-O-(beta-D-GlcA-(1-&gt;3)-beta-D-GalNAc-(1-&gt;4)-beta-D-GlcA-(1-&gt;3)-beta-D-Gal-(1-&gt;3)-beta-D-Gal-(1-&gt;4)-beta-D-Xyl)-L-seryl-[protein] + UDP + H(+). The catalysed reaction is 3-O-{[beta-D-GalNAc-(1-&gt;4)-beta-D-GlcA-(1-&gt;3)](n)-beta-D-GalNAc-(1-&gt;4)-beta-D-GlcA-(1-&gt;3)-beta-D-Gal-(1-&gt;3)-beta-D-Gal-(1-&gt;4)-beta-D-Xyl}-L-seryl-[protein] + UDP-alpha-D-glucuronate = 3-O-{beta-D-GlcA-(1-&gt;3)-[beta-D-GalNAc-(1-&gt;4)-beta-D-GlcA-(1-&gt;3)](n)-beta-D-GalNAc-(1-&gt;4)-beta-D-GlcA-(1-&gt;3)-beta-D-Gal-(1-&gt;3)-beta-D-Gal-(1-&gt;4)-beta-D-Xyl}-L-seryl-[protein] + UDP + H(+). Its function is as follows. Glycosyltransferase that catalyzes elongation of chondroitin, a polysaccharide composed of a repeating disaccharide of N-acetylgalactosamine (GalNAc) and glucuronic acid (GlcUA) units, by alternatively transferring the GlcUA and GalNAc moiety from UDP-GlcUA and UDP-GalNAc to the non-reducing ends of the chondroitin chain. Each chondroitin unit has the composition beta-(1-&gt;4)-GlcUA-beta-(1-&gt;3)-GalNAc. The protein is Chondroitin synthase (fcbD) of Pasteurella multocida (strain Pm70).